The sequence spans 474 residues: Aspartyl/glutamyl-tRNA(Asn/Gln) amidotransferase subunit B (474 aa).

It belongs to the GatB/GatE family. GatB subfamily. In terms of assembly, heterotrimer of A, B and C subunits.

The catalysed reaction is L-glutamyl-tRNA(Gln) + L-glutamine + ATP + H2O = L-glutaminyl-tRNA(Gln) + L-glutamate + ADP + phosphate + H(+). It carries out the reaction L-aspartyl-tRNA(Asn) + L-glutamine + ATP + H2O = L-asparaginyl-tRNA(Asn) + L-glutamate + ADP + phosphate + 2 H(+). Its function is as follows. Allows the formation of correctly charged Asn-tRNA(Asn) or Gln-tRNA(Gln) through the transamidation of misacylated Asp-tRNA(Asn) or Glu-tRNA(Gln) in organisms which lack either or both of asparaginyl-tRNA or glutaminyl-tRNA synthetases. The reaction takes place in the presence of glutamine and ATP through an activated phospho-Asp-tRNA(Asn) or phospho-Glu-tRNA(Gln). The polypeptide is Aspartyl/glutamyl-tRNA(Asn/Gln) amidotransferase subunit B (Limosilactobacillus reuteri (strain DSM 20016) (Lactobacillus reuteri)).